The primary structure comprises 438 residues: MNKIIIVGAVAGGATCASQIRRLDKESEIIVFEKDRDMSFANCALPYYIGNVIEDRRKVLAYTPNQFYDKKQITVKTYHEVIQINDERQTVTVLNHQTNQTFEESYDTLILSPGASANRLNTHSDISFTVRNLEDTETIDTFITNTKAQRALVVGAGYISLEVLENLHHRGLDVTWIHRSTNINKLMDQDMNQPIIDEIEKRNITYRFNEEISHVNGHEVTFTSGKVENFDLIIEGVGTHPNSQFIKSSNVILNDKGYIPVNHNFQTNIPNIYALGDVITSHYRHVNLPAQVPLAWGAHRGASIIAEQLSGNSSIHFKGYLGNNIVKFFDYTLASVGIKPNELKNFDYDMVEVKQGAHAGYYPGNSPLHLRVYFEKDSRKLIRAAAVGKQGADKRIDVLSMAMMNNATVDDLTEFEVAYAPPYSHPKDLINLIGYKAQ.

Residue 8-33 coordinates FAD; sequence GAVAGGATCASQIRRLDKESEIIVFE. Substrate is bound by residues Thr-15, Gln-19, Arg-22, Ser-39, and Asn-42. The active-site Nucleophile is Cys-43. Catalysis depends on Cys-43, which acts as the Redox-active. Position 71 (Lys-71) interacts with substrate. 151–166 is a binding site for NADP(+); it reads ALVVGAGYISLEVLEN. 267–277 serves as a coordination point for FAD; that stretch reads TNIPNIYALGD. His-299 serves as a coordination point for substrate. FAD is bound at residue Tyr-419. Lys-427 serves as a coordination point for substrate.

The protein belongs to the class-III pyridine nucleotide-disulfide oxidoreductase family. Homodimer. Requires FAD as cofactor.

The catalysed reaction is NADP(+) + 2 CoA = CoA-disulfide + NADPH + H(+). Its function is as follows. Catalyzes specifically the NADPH-dependent reduction of coenzyme A disulfide. This Staphylococcus epidermidis (strain ATCC 35984 / DSM 28319 / BCRC 17069 / CCUG 31568 / BM 3577 / RP62A) protein is Coenzyme A disulfide reductase.